Here is a 130-residue protein sequence, read N- to C-terminus: Lysozyme C (130 aa).

Positions 1 to 130 constitute a C-type lysozyme domain; sequence KIYERCELAR…LTPYIRGCGV (130 aa). 4 disulfides stabilise this stretch: cysteine 6–cysteine 128, cysteine 30–cysteine 116, cysteine 65–cysteine 81, and cysteine 77–cysteine 95. Residues glutamate 35 and aspartate 53 contribute to the active site.

This sequence belongs to the glycosyl hydrolase 22 family. As to quaternary structure, monomer.

It is found in the secreted. It catalyses the reaction Hydrolysis of (1-&gt;4)-beta-linkages between N-acetylmuramic acid and N-acetyl-D-glucosamine residues in a peptidoglycan and between N-acetyl-D-glucosamine residues in chitodextrins.. Functionally, lysozymes have primarily a bacteriolytic function; those in tissues and body fluids are associated with the monocyte-macrophage system and enhance the activity of immunoagents. In Oryctolagus cuniculus (Rabbit), this protein is Lysozyme C (LYZ).